Consider the following 508-residue polypeptide: Photosystem II CP47 reaction center protein (508 aa).

The next 6 helical transmembrane spans lie at 21–36 (AVHL…WAGS), 101–115 (IVLS…IWHW), 140–156 (GIHL…FGAF), 203–218 (IAAG…FHLS), 237–252 (VLSS…AFVV), and 457–472 (TFAL…HGAR).

It belongs to the PsbB/PsbC family. PsbB subfamily. As to quaternary structure, PSII is composed of 1 copy each of membrane proteins PsbA, PsbB, PsbC, PsbD, PsbE, PsbF, PsbH, PsbI, PsbJ, PsbK, PsbL, PsbM, PsbT, PsbX, PsbY, PsbZ, Psb30/Ycf12, at least 3 peripheral proteins of the oxygen-evolving complex and a large number of cofactors. It forms dimeric complexes. The cofactor is Binds multiple chlorophylls. PSII binds additional chlorophylls, carotenoids and specific lipids..

The protein resides in the plastid. It localises to the chloroplast thylakoid membrane. Its function is as follows. One of the components of the core complex of photosystem II (PSII). It binds chlorophyll and helps catalyze the primary light-induced photochemical processes of PSII. PSII is a light-driven water:plastoquinone oxidoreductase, using light energy to abstract electrons from H(2)O, generating O(2) and a proton gradient subsequently used for ATP formation. The protein is Photosystem II CP47 reaction center protein of Anthoceros angustus (Hornwort).